The sequence spans 541 residues: EH domain-containing protein 4 (541 aa).

The residue at position 1 (M1) is an N-acetylmethionine. Residues 58–289 form the Dynamin-type G domain; it reads FENKPMILLV…DLFRDIQSLP (232 aa). The G1 motif stretch occupies residues 68–75; sequence GQYSTGKT. An ATP-binding site is contributed by 68–75; that stretch reads GQYSTGKT. Residues 94–95 are G2 motif; it reads EP. The tract at residues 156–159 is G3 motif; the sequence is DSPG. Position 162 is a phosphoserine (S162). Residues 222-225 form a G4 motif region; the sequence is NKAD. Residue K223 participates in ATP binding. A region of interest (G5 motif) is located at residue V246. W261 is an ATP binding site. An EH domain is found at 447 to 535; it reads DKPVYDELFY…PHLVPPSHRK (89 aa). Y451 carries the post-translational modification Phosphotyrosine. A Phosphoserine modification is found at S459. Positions 479-514 constitute an EF-hand domain; sequence LPNSVLGKIWKLADCDCDGMLDEEEFALAKHLIKIK. Ca(2+) is bound by residues D492, D494, D496, M498, and E503.

This sequence belongs to the TRAFAC class dynamin-like GTPase superfamily. Dynamin/Fzo/YdjA family. EHD subfamily. Homooligomer, and heterooligomer with EHD1, EHD2 and EHD3. Forms a complex with EHD4 and MICALL1; the complex controls CDH5 trafficking and coordinates angiogenesis. As to expression, highly expressed in pancreas and heart.

The protein resides in the early endosome membrane. The protein localises to the recycling endosome membrane. It localises to the cell membrane. It is found in the cell junction. Its subcellular location is the adherens junction. Functionally, ATP- and membrane-binding protein that probably controls membrane reorganization/tubulation upon ATP hydrolysis. Plays a role in early endosomal transport. During sprouting angiogenesis, in complex with PACSIN2 and MICALL1, forms recycling endosome-like tubular structure at asymmetric adherens junctions to control CDH5 trafficking. The polypeptide is EH domain-containing protein 4 (Homo sapiens (Human)).